The following is a 111-amino-acid chain: Ig kappa chain V-III region PC 2485/PC 4039 (111 aa).

The segment at 1 to 23 (DIVLTQSPASLAVSLGQRATISC) is framework-1. Residues Cys23 and Cys92 are joined by a disulfide bond. A complementarity-determining-1 region spans residues 24 to 38 (RASKSVSTSGYSYMH). The segment at 39 to 53 (WYQQKPGQPPKLLIY) is framework-2. Residues 54 to 60 (LASSLES) are complementarity-determining-2. The interval 61–92 (GVPARFSGSGSGTDFTLNIQPVEEEDAAIYYC) is framework-3. The tract at residues 93-101 (QHSRELPLT) is complementarity-determining-3. A framework-4 region spans residues 102–111 (FGAGTKLELK).

In Mus musculus (Mouse), this protein is Ig kappa chain V-III region PC 2485/PC 4039.